The chain runs to 242 residues: Large ribosomal subunit protein uL1 (242 aa).

The protein belongs to the universal ribosomal protein uL1 family. Part of the 50S ribosomal subunit.

In terms of biological role, binds directly to 23S rRNA. The L1 stalk is quite mobile in the ribosome, and is involved in E site tRNA release. Its function is as follows. Protein L1 is also a translational repressor protein, it controls the translation of the L11 operon by binding to its mRNA. This chain is Large ribosomal subunit protein uL1, found in Sulfurihydrogenibium sp. (strain YO3AOP1).